The sequence spans 337 residues: Tert-butanol monooxygenase / tert-amyl alcohol desaturase reductase subunit (337 aa).

Residues 9–114 (KYPKTALNLR…GHPRNNFPLI (106 aa)) form the FAD-binding FR-type domain. A 2Fe-2S ferredoxin-type domain is found at 254-337 (FQIKIASTGT…SKGATLVLDL (84 aa)). Residues Cys288, Cys293, Cys296, and Cys324 each coordinate [2Fe-2S] cluster.

The protein belongs to the PDR/VanB family. As to quaternary structure, this two-component enzyme is composed of an oxygenase (MdpJ) and a reductase (MdpK). [2Fe-2S] cluster is required as a cofactor.

In terms of biological role, reductase component of a two-component system involved in the degradation of tertiary alcohols such as tert-butyl alcohol (TBA) and tert-amyl alcohol (TAA). MdpK probably provides electrons via its [2Fe-2S] iron-sulfur cluster to the MdpJ oxygenase subunit. The chain is Tert-butanol monooxygenase / tert-amyl alcohol desaturase reductase subunit from Aquincola tertiaricarbonis.